A 461-amino-acid polypeptide reads, in one-letter code: UDP-N-acetylmuramate--L-alanine ligase (461 aa).

Position 112 to 118 (112 to 118 (GTHGKTT)) interacts with ATP.

The protein belongs to the MurCDEF family.

The protein resides in the cytoplasm. The catalysed reaction is UDP-N-acetyl-alpha-D-muramate + L-alanine + ATP = UDP-N-acetyl-alpha-D-muramoyl-L-alanine + ADP + phosphate + H(+). It participates in cell wall biogenesis; peptidoglycan biosynthesis. Its function is as follows. Cell wall formation. The chain is UDP-N-acetylmuramate--L-alanine ligase from Hydrogenovibrio crunogenus (strain DSM 25203 / XCL-2) (Thiomicrospira crunogena).